Reading from the N-terminus, the 120-residue chain is Large ribosomal subunit protein uL18 (120 aa).

Residues 1-10 are compositionally biased toward basic and acidic residues; the sequence is MKRTRTESVQ. The segment at 1–24 is disordered; it reads MKRTRTESVQRRHSRIRRKVEGTP.

The protein belongs to the universal ribosomal protein uL18 family. Part of the 50S ribosomal subunit; part of the 5S rRNA/L5/L18/L25 subcomplex. Contacts the 5S and 23S rRNAs.

Functionally, this is one of the proteins that bind and probably mediate the attachment of the 5S RNA into the large ribosomal subunit, where it forms part of the central protuberance. This Gloeothece citriformis (strain PCC 7424) (Cyanothece sp. (strain PCC 7424)) protein is Large ribosomal subunit protein uL18.